Here is a 555-residue protein sequence, read N- to C-terminus: Urocanate hydratase (555 aa).

NAD(+) contacts are provided by residues 51–52 (GG), Gln-129, 175–177 (GMG), Glu-195, Arg-200, 241–242 (NA), 262–266 (QTSAH), 272–273 (YL), and Tyr-321. Cys-409 is a catalytic residue. Residue Gly-491 participates in NAD(+) binding.

The protein belongs to the urocanase family. NAD(+) serves as cofactor.

It localises to the cytoplasm. It carries out the reaction 4-imidazolone-5-propanoate = trans-urocanate + H2O. It participates in amino-acid degradation; L-histidine degradation into L-glutamate; N-formimidoyl-L-glutamate from L-histidine: step 2/3. Its function is as follows. Catalyzes the conversion of urocanate to 4-imidazolone-5-propionate. The chain is Urocanate hydratase from Rhizorhabdus wittichii (strain DSM 6014 / CCUG 31198 / JCM 15750 / NBRC 105917 / EY 4224 / RW1) (Sphingomonas wittichii).